A 53-amino-acid polypeptide reads, in one-letter code: UPF0391 membrane protein azo1750 (53 aa).

The next 2 membrane-spanning stretches (helical) occupy residues 6 to 26 (VIFL…IAAG) and 30 to 50 (IAKI…VLGM).

This sequence belongs to the UPF0391 family.

It is found in the cell membrane. The polypeptide is UPF0391 membrane protein azo1750 (Azoarcus sp. (strain BH72)).